Reading from the N-terminus, the 485-residue chain is Glutamyl-tRNA(Gln) amidotransferase subunit A (485 aa).

Residues K79 and S154 each act as charge relay system in the active site. The Acyl-ester intermediate role is filled by S178.

Belongs to the amidase family. GatA subfamily. Heterotrimer of A, B and C subunits.

It carries out the reaction L-glutamyl-tRNA(Gln) + L-glutamine + ATP + H2O = L-glutaminyl-tRNA(Gln) + L-glutamate + ADP + phosphate + H(+). Its function is as follows. Allows the formation of correctly charged Gln-tRNA(Gln) through the transamidation of misacylated Glu-tRNA(Gln) in organisms which lack glutaminyl-tRNA synthetase. The reaction takes place in the presence of glutamine and ATP through an activated gamma-phospho-Glu-tRNA(Gln). This chain is Glutamyl-tRNA(Gln) amidotransferase subunit A, found in Clostridium botulinum (strain Kyoto / Type A2).